The chain runs to 909 residues: Probable dipeptidyl-aminopeptidase B (909 aa).

The tract at residues 1–63 is disordered; sequence MRVGSRINDE…HNHNGRAQGN (63 aa). The Cytoplasmic portion of the chain corresponds to 1–94; it reads MRVGSRINDE…NGKSNQRRTL (94 aa). The segment covering 27–38 has biased composition (low complexity); sequence DSSSTASISLTL. A helical; Signal-anchor for type II membrane protein membrane pass occupies residues 95-115; the sequence is IVFWLLVALCVGGWAVAFLFF. Residues 116–909 lie on the Vacuolar side of the membrane; sequence VTSPGNKTST…YSNFLPIRSF (794 aa). Residue Asn121 is glycosylated (N-linked (GlcNAc...) asparagine). Residues 123-134 show a composition bias toward polar residues; that stretch reads TSTSPHSGSNSP. Residues 123 to 144 are disordered; the sequence is TSTSPHSGSNSPEGDVTKPGIP. N-linked (GlcNAc...) asparagine glycosylation is found at Asn207, Asn303, and Asn355. Ser760 (charge relay system) is an active-site residue. Residues Asn814, Asn819, and Asn822 are each glycosylated (N-linked (GlcNAc...) asparagine). Active-site charge relay system residues include Asp837 and His870. N-linked (GlcNAc...) asparagine glycosylation occurs at Asn888.

The protein belongs to the peptidase S9B family.

The protein localises to the vacuole membrane. The enzyme catalyses Release of an N-terminal dipeptide, Xaa-Yaa-|-Zaa-, from a polypeptide, preferentially when Yaa is Pro, provided Zaa is neither Pro nor hydroxyproline.. Type IV dipeptidyl-peptidase which removes N-terminal dipeptides sequentially from polypeptides having unsubstituted N-termini provided that the penultimate residue is proline. The polypeptide is Probable dipeptidyl-aminopeptidase B (DAPB) (Arthroderma benhamiae (strain ATCC MYA-4681 / CBS 112371) (Trichophyton mentagrophytes)).